The following is a 198-amino-acid chain: Recombination protein RecR (198 aa).

The segment at 59-74 (CSLCCNYTDHDPCPIC) adopts a C4-type zinc-finger fold. The region spanning 82–175 (TLLCIVEQPR…KVTRIAHGLP (94 aa)) is the Toprim domain.

The protein belongs to the RecR family.

In terms of biological role, may play a role in DNA repair. It seems to be involved in an RecBC-independent recombinational process of DNA repair. It may act with RecF and RecO. The polypeptide is Recombination protein RecR (Desulfitobacterium hafniense (strain DSM 10664 / DCB-2)).